A 149-amino-acid chain; its full sequence is Large ribosomal subunit protein uL15 (149 aa).

The segment at 14–63 (ASRKRVGRGSGSGLGCTSGKGNKGQNARAGGGVRPGFEGGQMPLQRRLPK) is disordered. 2 stretches are compositionally biased toward gly residues: residues 21–35 (RGSG…GKGN) and 42–52 (AGGGVRPGFEG).

It belongs to the universal ribosomal protein uL15 family. As to quaternary structure, part of the 50S ribosomal subunit.

Its function is as follows. Binds to the 23S rRNA. The protein is Large ribosomal subunit protein uL15 of Nitratidesulfovibrio vulgaris (strain DSM 19637 / Miyazaki F) (Desulfovibrio vulgaris).